A 243-amino-acid polypeptide reads, in one-letter code: Orotidine 5'-phosphate decarboxylase (243 aa).

Substrate-binding positions include Asp-18, Lys-39, Asp-66–Thr-75, Thr-130, Arg-192, Gln-201, Gly-221, and Arg-222. The active-site Proton donor is the Lys-68.

It belongs to the OMP decarboxylase family. Type 1 subfamily. Homodimer.

It catalyses the reaction orotidine 5'-phosphate + H(+) = UMP + CO2. The protein operates within pyrimidine metabolism; UMP biosynthesis via de novo pathway; UMP from orotate: step 2/2. Its function is as follows. Catalyzes the decarboxylation of orotidine 5'-monophosphate (OMP) to uridine 5'-monophosphate (UMP). This is Orotidine 5'-phosphate decarboxylase from Synechococcus sp. (strain CC9311).